Reading from the N-terminus, the 393-residue chain is Formate-dependent phosphoribosylglycinamide formyltransferase (393 aa).

Residues 22–23 (EL) and glutamate 82 each bind N(1)-(5-phospho-beta-D-ribosyl)glycinamide. ATP is bound by residues arginine 114, lysine 155, 160 to 165 (SSGKGQ), 195 to 198 (EGFI), and glutamate 203. The region spanning 119–308 (RLAAEELGLP…EFALHARAIL (190 aa)) is the ATP-grasp domain. Mg(2+) contacts are provided by glutamate 267 and glutamate 279. Residues aspartate 286, lysine 356, and 363 to 364 (RR) contribute to the N(1)-(5-phospho-beta-D-ribosyl)glycinamide site.

It belongs to the PurK/PurT family. Homodimer.

It catalyses the reaction N(1)-(5-phospho-beta-D-ribosyl)glycinamide + formate + ATP = N(2)-formyl-N(1)-(5-phospho-beta-D-ribosyl)glycinamide + ADP + phosphate + H(+). The protein operates within purine metabolism; IMP biosynthesis via de novo pathway; N(2)-formyl-N(1)-(5-phospho-D-ribosyl)glycinamide from N(1)-(5-phospho-D-ribosyl)glycinamide (formate route): step 1/1. Functionally, involved in the de novo purine biosynthesis. Catalyzes the transfer of formate to 5-phospho-ribosyl-glycinamide (GAR), producing 5-phospho-ribosyl-N-formylglycinamide (FGAR). Formate is provided by PurU via hydrolysis of 10-formyl-tetrahydrofolate. This chain is Formate-dependent phosphoribosylglycinamide formyltransferase, found in Azoarcus sp. (strain BH72).